The following is a 379-amino-acid chain: Alcohol dehydrogenase 2 (379 aa).

Cysteine 47, threonine 49, histidine 69, cysteine 99, cysteine 102, cysteine 105, cysteine 113, and cysteine 177 together coordinate Zn(2+). An alcohol is bound by residues threonine 49 and histidine 69. An NAD(+)-binding site is contributed by threonine 49. NAD(+) contacts are provided by residues 202 to 207 (GLGAVG), aspartate 226, lysine 231, threonine 272, valine 295, 295 to 297 (VGV), phenylalanine 322, and arginine 372.

The protein belongs to the zinc-containing alcohol dehydrogenase family. Homodimer. Zn(2+) is required as a cofactor.

The protein resides in the cytoplasm. The enzyme catalyses a primary alcohol + NAD(+) = an aldehyde + NADH + H(+). It catalyses the reaction a secondary alcohol + NAD(+) = a ketone + NADH + H(+). The polypeptide is Alcohol dehydrogenase 2 (ADH2) (Zea mays (Maize)).